A 273-amino-acid polypeptide reads, in one-letter code: XIAP-associated factor 1 (273 aa).

A TRAF-type zinc finger spans residues 22–80; it reads LHEAHCLRFIVLCPECEEPIPESKMKEHMEVVHQQTKESQQHPAKCKFCELAVQLSNLD. The interval 181 to 228 is disordered; it reads GNRRSTVSKDVRPKTKNRNSSTKRETKKQNGTVALPLKSGLQQRADLP.

In terms of assembly, interacts with BIRC1, BIRC2, BIRC3, BIRC4, BIRC7 and BIRC8. Part of an complex consisting of BIRC4, XAF1 and BIRC5; the complex formation requires IFN-beta stimulation. Interacts with RNF114, the interaction increases XAF1 stability and proapoptotic effects, and may regulate IFN signaling.

The protein resides in the cytoplasm. Its subcellular location is the nucleus. It is found in the mitochondrion. In terms of biological role, seems to function as a negative regulator of members of the IAP (inhibitor of apoptosis protein) family. Inhibits anti-caspase activity of BIRC4. Induces cleavage and inactivation of BIRC4 independent of caspase activation. Mediates TNF-alpha-induced apoptosis and is involved in apoptosis in trophoblast cells. May inhibit BIRC4 indirectly by activating the mitochondrial apoptosis pathway. After translocation to mitochondria, promotes translocation of BAX to mitochondria and cytochrome c release from mitochondria. Seems to promote the redistribution of BIRC4 from the cytoplasm to the nucleus, probably independent of BIRC4 inactivation which seems to occur in the cytoplasm. The BIRC4-XAF1 complex mediates down-regulation of BIRC5/survivin; the process requires the E3 ligase activity of BIRC4. Seems to be involved in cellular sensitivity to the proapoptotic actions of TRAIL. May be a tumor suppressor by mediating apoptosis resistance of cancer cells. The sequence is that of XIAP-associated factor 1 (Xaf1) from Mus musculus (Mouse).